A 344-amino-acid polypeptide reads, in one-letter code: Serpentine receptor class H-72 (344 aa).

Helical transmembrane passes span 30–50 (GLAF…FFTG), 66–86 (LSLV…SFFI), 110–132 (TVVQ…TLLF), 155–175 (WLAG…FNLA), 221–241 (SIYM…LVIV), 259–279 (YGLI…SVLI), and 292–312 (LVSI…LLVH).

It belongs to the nematode receptor-like protein srh family.

It localises to the membrane. In Caenorhabditis elegans, this protein is Serpentine receptor class H-72 (srh-72).